A 56-amino-acid polypeptide reads, in one-letter code: Hydrophobic protein LTI6A (56 aa).

The next 2 helical transmembrane spans lie at 11–31 and 34–54; these read IILAIILPPLGVFFKFGCGIE and ICLLLTFFGYLPGIIYAVWVI.

This sequence belongs to the UPF0057 (PMP3) family. Expressed in shoot of cold stressed seedlings.

It is found in the membrane. Plays a role in the regulation of membrane potential. Could mediate a proton leak. This is Hydrophobic protein LTI6A (LTI6A) from Oryza sativa subsp. japonica (Rice).